A 118-amino-acid polypeptide reads, in one-letter code: NADH-quinone oxidoreductase subunit A (118 aa).

Transmembrane regions (helical) follow at residues 5-25, 61-81, and 90-110; these read FAAVGIALVVAIAINLIMMLM, FLYALVFTAFDVETVFLFPWA, and FAFIEMFVFIVILLVGFWYAW.

This sequence belongs to the complex I subunit 3 family. As to quaternary structure, NDH-1 is composed of 14 different subunits. Subunits NuoA, H, J, K, L, M, N constitute the membrane sector of the complex.

It is found in the cell membrane. It catalyses the reaction a quinone + NADH + 5 H(+)(in) = a quinol + NAD(+) + 4 H(+)(out). NDH-1 shuttles electrons from NADH, via FMN and iron-sulfur (Fe-S) centers, to quinones in the respiratory chain. The immediate electron acceptor for the enzyme in this species is believed to be a menaquinone. Couples the redox reaction to proton translocation (for every two electrons transferred, four hydrogen ions are translocated across the cytoplasmic membrane), and thus conserves the redox energy in a proton gradient. In Desulfitobacterium hafniense (strain Y51), this protein is NADH-quinone oxidoreductase subunit A.